Here is a 125-residue protein sequence, read N- to C-terminus: Small ribosomal subunit protein uS12m (125 aa).

Belongs to the universal ribosomal protein uS12 family.

The protein resides in the mitochondrion. Functionally, protein S12 is involved in the translation initiation step. The protein is Small ribosomal subunit protein uS12m (RPS12) of Helianthus annuus (Common sunflower).